Consider the following 343-residue polypeptide: Anthranilate phosphoribosyltransferase (343 aa).

5-phospho-alpha-D-ribose 1-diphosphate contacts are provided by residues Gly86, 89–90 (GD), Thr94, 96–99 (NIST), 114–122 (KHGNRSASG), and Ser126. Gly86 provides a ligand contact to anthranilate. Ser98 contacts Mg(2+). Anthranilate is bound at residue Asn117. Arg172 is an anthranilate binding site. Mg(2+) is bound by residues Asp231 and Glu232.

Belongs to the anthranilate phosphoribosyltransferase family. As to quaternary structure, homodimer. Mg(2+) serves as cofactor.

The catalysed reaction is N-(5-phospho-beta-D-ribosyl)anthranilate + diphosphate = 5-phospho-alpha-D-ribose 1-diphosphate + anthranilate. Its pathway is amino-acid biosynthesis; L-tryptophan biosynthesis; L-tryptophan from chorismate: step 2/5. Its function is as follows. Catalyzes the transfer of the phosphoribosyl group of 5-phosphorylribose-1-pyrophosphate (PRPP) to anthranilate to yield N-(5'-phosphoribosyl)-anthranilate (PRA). The protein is Anthranilate phosphoribosyltransferase of Synechococcus sp. (strain JA-3-3Ab) (Cyanobacteria bacterium Yellowstone A-Prime).